The following is a 129-amino-acid chain: Follitropin subunit beta (129 aa).

The signal sequence occupies residues 1 to 18; the sequence is MKTLQFFFLFCCWKAICC. 6 cysteine pairs are disulfide-bonded: cysteine 21–cysteine 69, cysteine 35–cysteine 84, cysteine 38–cysteine 122, cysteine 46–cysteine 100, cysteine 50–cysteine 102, and cysteine 105–cysteine 112. Residues asparagine 25 and asparagine 42 are each glycosylated (N-linked (GlcNAc...) asparagine).

The protein belongs to the glycoprotein hormones subunit beta family. In terms of assembly, heterodimer. The active follitropin is a heterodimer composed of an alpha chain/CGA shared with other hormones and a unique beta chain/FSHB shown here.

The protein resides in the secreted. In terms of biological role, together with the alpha chain CGA constitutes follitropin, the follicle-stimulating hormone, and provides its biological specificity to the hormone heterodimer. Binds FSHR, a G protein-coupled receptor, on target cells to activate downstream signaling pathways. Follitropin is involved in follicle development and spermatogenesis in reproductive organs. This chain is Follitropin subunit beta (FSHB), found in Homo sapiens (Human).